The following is a 365-amino-acid chain: MKEVKEALFMNKGEGESSYAQNSSFTETVTSMTMPVLENAVETLFSKDFHLLQALNAVDLGCAAGPTTFTVISTIKKMMEKKCRELNCQTLELQVYLNDLPGNDFNTLFKGLSSKVVGNNCEEVSCYVVGVPGSFHGRLFPRNSLHLVHSCYSVHWLTQAPKGLTSKEGLALNKGKIYISKTSPPVVREAYLSQFHEDFTMFLNSRSQEVVPNGCMVLILRGRLSSDPSDMESCFTWELLAAAIAELVSQGLIDEDKLDTFNVPSYFPSLEEVKDIVERNGSFTIDHMEGFELDSPQMQENDKWVRGEKFATVARASTEPIISNQFGHEIMDKLYEKFTHIVISDLEAKIPKVTSIILVLSKIVG.

S-adenosyl-L-homocysteine is bound at residue tyrosine 19. Threonine 26 contacts theobromine. Cysteine 62, aspartate 99, leucine 100, serine 134, and phenylalanine 135 together coordinate S-adenosyl-L-homocysteine. Residues tyrosine 152, histidine 155, and tryptophan 156 each coordinate theobromine. Asparagine 173 is a binding site for Mg(2+). Arginine 221 contributes to the theobromine binding site. Aspartate 259, phenylalanine 261, and asparagine 262 together coordinate Mg(2+).

It belongs to the methyltransferase superfamily. Type-7 methyltransferase family. Mg(2+) serves as cofactor.

The enzyme catalyses 7-methylxanthine + S-adenosyl-L-methionine = theobromine + S-adenosyl-L-homocysteine + H(+). Its function is as follows. No detectable N-methyltransferase activity. The protein is Probable 7-methylxanthine methyltransferase PCS2 of Camellia ptilophylla (Cocoa tea).